The primary structure comprises 540 residues: Zinc transporter ZIP5 (540 aa).

Residues 1 to 20 (MMGSPVSHLLAGFCVWVVLG) form the signal peptide. Residues 21 to 212 (WVGGSVPNLG…PAPPGDLLSA (192 aa)) are Extracellular-facing. Residue Asn50 is glycosylated (N-linked (GlcNAc...) asparagine). The interval 78–101 (HGPLTGRAASPAADNSTHRPQNPE) is disordered. Positions 90-101 (ADNSTHRPQNPE) are enriched in polar residues. N-linked (GlcNAc...) asparagine glycosylation occurs at Asn160. A helical transmembrane segment spans residues 213-233 (LLQSALAVLLLSLPSPLSLLL). Over 234 to 244 (LRLLGPRLLRP) the chain is Cytoplasmic. Residues 245 to 265 (LLGFLGALAVGTLCGDALLHL) traverse the membrane as a helical segment. Residues 266 to 287 (LPHAQEGRHAGPGGLPEKDLGP) lie on the Extracellular side of the membrane. Residues 288-308 (GLSVLGGLFLLFVLENMLGLL) traverse the membrane as a helical segment. Topologically, residues 309 to 444 (RHRGLRPRCC…LLQSGLSFRR (136 aa)) are cytoplasmic. Residues 324 to 377 (NLETRNLDPENGSGMALQPLQAAPEPGAQGQREKNSQHPPALAPPGHQGHSHGH) are disordered. Ser336 is modified (phosphoserine). Position 375 is a pros-methylhistidine (His375). A helical membrane pass occupies residues 445 to 465 (LLLLSLVSGALGLGGAVLGVG). Residues 466-470 (LSLGP) are Extracellular-facing. A helical membrane pass occupies residues 471 to 491 (VPLTPWVFGVTAGVFLYVALV). The Cytoplasmic segment spans residues 492 to 508 (DMLPALLRPPEPLPTPH). A helical transmembrane segment spans residues 509–529 (VLLQGLGLLLGGGLMLAITLL). Over 530 to 540 (EERLLPVTTEG) the chain is Extracellular.

This sequence belongs to the ZIP transporter (TC 2.A.5) family. As to quaternary structure, homodimer. In terms of processing, methylated at His-375 by METTL9. Post-translationally, N-Glycosylated. As to expression, expressed in liver, kidney, pancreas, small intestine, colon, spleen, fetal liver and fetal kidney.

The protein localises to the basolateral cell membrane. It catalyses the reaction Zn(2+)(in) = Zn(2+)(out). Its function is as follows. Uniporter that transports zinc(2+) into polarized cells of enterocytes, pancreatic acinar and endoderm cells across the basolateral membrane and participates, notably, in zinc excretion from the intestine by the uptake of zinc from the blood into the intestine. The transport mechanism is temperature- and concentration-dependent and saturable. In addition, is also a high affinity copper transporter in vitro. Also may regulate glucose-stimulated insulin secretion (GSIS) in islets primarily through the zinc-activated SIRT1-PPARGC1A axis. Could regulate the BMP/TGF-beta (bone morphogenetic protein/transforming growth factor-beta) signaling pathway and modulates extracellular matrix (ECM) proteins of the sclera. Plays a role in eye development. This chain is Zinc transporter ZIP5, found in Homo sapiens (Human).